The primary structure comprises 147 residues: Large ribosomal subunit protein uL15 (147 aa).

A compositionally biased stretch (basic and acidic residues) spans 1 to 14 (MKLHELRPAEGAVR). A disordered region spans residues 1–54 (MKLHELRPAEGAVRDRKRKGRGTASGLGKTAGRGSNGQKARSGGGVRPGFEGGQ). 2 stretches are compositionally biased toward gly residues: residues 23–35 (TASG…GRGS) and 42–52 (SGGGVRPGFEG).

This sequence belongs to the universal ribosomal protein uL15 family. As to quaternary structure, part of the 50S ribosomal subunit.

In terms of biological role, binds to the 23S rRNA. The polypeptide is Large ribosomal subunit protein uL15 (Alkaliphilus oremlandii (strain OhILAs) (Clostridium oremlandii (strain OhILAs))).